The following is a 323-amino-acid chain: Olfactory receptor 51S1 (323 aa).

Over 1 to 33 (MSTLPTQIAPNSSTSMAPTFLLVGMPGLSGAPS) the chain is Extracellular. A glycan (N-linked (GlcNAc...) asparagine) is linked at asparagine 11. A helical transmembrane segment spans residues 34–54 (WWTLPLIAVYLLSALGNGTIL). Residues 55 to 62 (WIIALQPA) are Cytoplasmic-facing. Residues 63–83 (LHRPMHFFLFLLSVSDIGLVT) form a helical membrane-spanning segment. The Extracellular portion of the chain corresponds to 84–107 (ALMPTLLGIALAGAHTVPASACLL). Cysteine 105 and cysteine 197 form a disulfide bridge. Residues 108–128 (QMVFIHVFSVMESSVLLAMSI) traverse the membrane as a helical segment. Topologically, residues 129 to 147 (DRALAICRPLHYPALLTNG) are cytoplasmic. Residues 148 to 168 (VISKISLAISFRCLGLHLPLP) traverse the membrane as a helical segment. Over 169–203 (FLLAYMPYCLPQVLTHSYCLHPDVARLACPEAWGA) the chain is Extracellular. A helical transmembrane segment spans residues 204-224 (AYSLFVVLSAMGLDPLLIFFS). Topologically, residues 225-244 (YGLIGKVLQGVESREDRWKA) are cytoplasmic. A helical transmembrane segment spans residues 245 to 265 (GQTCAAHLSAVLLFYIPMILL). Over 266-280 (ALINHPELPITQHTH) the chain is Extracellular. A helical membrane pass occupies residues 281–301 (TLLSYVHFLLPPLINPILYSV). Residues 302 to 323 (KMKEIRKRILNRLQPRKVGGAQ) are Cytoplasmic-facing.

Belongs to the G-protein coupled receptor 1 family.

It localises to the cell membrane. In terms of biological role, odorant receptor. This Homo sapiens (Human) protein is Olfactory receptor 51S1 (OR51S1).